The chain runs to 595 residues: MTMTLHTKASGMALLHQIQANELEPLNRPQLKIPLERPLGEVYVDSSKPAVYNYPEGAAYDFNAAAAASAPVYGQSGLAYGPGSEAAAFGANGLGGFQPLNSVSPSPLVLLHPPPQLSPFLHPHGQQVPYYLENEPSGYAVREAGPPAFYRPNSDNRRQGGRERLASTSDKGSMAMESAKETRYCAVCNDYASGYHYGVWSCEGCKAFFKRSIQGHNDYMCPATNQCTIDKNRRKSCQACRLRKCYEVGMMKGGIRKDRRGGRMLKHKRQRDDGEGRNEAVPPGDMRSANLWPSPLLIKHTKKNSPVLSLTADQMISALLEAEPPIIYSEYDPTRPLSEASMMGLLTNLADRELVHMINWAKRVPGFLDLSLHDQVHLLECAWLEILMIGLVWRSMEHPGKLLFAPNLLLDRNQGKCVEGMVEIFDMLLATSSRFRMMNLQGEEFVCLKSIILLNSGVYTFLSSTLKSLEEKDHIHRVLDKITDTLIHLMAKAGLTLQQQHRRLAQLLLILSHFRHMSNKGMEHLYNMKCKNVVPLYDLLLEMLDAHRLHAPTNLGGPPPEDMSQSQLATSGSTPSHSLQMYYITGEAENFPTTI.

Positions 1-184 (MTMTLHTKAS…AMESAKETRY (184 aa)) are modulating (transactivation AF-1); mediates interaction with MACROD1. A glycan (O-linked (GlcNAc) serine) is linked at serine 10. Residues 35 to 47 (LERPLGEVYVDSS) are required for interaction with NCOA1. The segment at 35-174 (LERPLGEVYV…LASTSDKGSM (140 aa)) is interaction with DDX5; self-association. Residues serine 104 and serine 106 each carry the phosphoserine; by CDK2 modification. Serine 118 carries the phosphoserine modification. The interval 144–174 (AGPPAFYRPNSDNRRQGGRERLASTSDKGSM) is disordered. The segment covering 154–165 (SDNRRQGGRERL) has biased composition (basic and acidic residues). Residue serine 167 is modified to Phosphoserine; by CK2. 2 NR C4-type zinc fingers span residues 185 to 205 (CAVCNDYASGYHYGVWSCEGC) and 221 to 245 (CPATNQCTIDKNRRKSCQACRLRKC). The segment at residues 185 to 250 (CAVCNDYASG…RLRKCYEVGM (66 aa)) is a DNA-binding region (nuclear receptor). Residues 185-310 (CAVCNDYASG…TKKNSPVLSL (126 aa)) form a mediates interaction with DNTTIP2 region. Residues 251–310 (MKGGIRKDRRGGRMLKHKRQRDDGEGRNEAVPPGDMRSANLWPSPLLIKHTKKNSPVLSL) form a hinge region. Residues 257–269 (KDRRGGRMLKHKR) show a composition bias toward basic residues. The tract at residues 257–288 (KDRRGGRMLKHKRQRDDGEGRNEAVPPGDMRS) is disordered. Arginine 260 is subject to Asymmetric dimethylarginine; by PRMT1. The tract at residues 262–595 (GRMLKHKRQR…GEAENFPTTI (334 aa)) is interaction with AKAP13. Positions 264–594 (MLKHKRQRDD…TGEAENFPTT (331 aa)) are self-association. The 237-residue stretch at 311-547 (TADQMISALL…DLLLEMLDAH (237 aa)) folds into the NR LBD domain. The interval 311–594 (TADQMISALL…TGEAENFPTT (284 aa)) is transactivation AF-2. The 17beta-estradiol site is built by glutamate 353 and arginine 394. Cysteine 447 carries S-palmitoyl cysteine lipidation. Histidine 524 is a binding site for 17beta-estradiol. A Phosphotyrosine; by Tyr-kinases modification is found at tyrosine 537. The segment at 551 to 575 (APTNLGGPPPEDMSQSQLATSGSTP) is disordered. Positions 563-575 (MSQSQLATSGSTP) are enriched in polar residues.

It belongs to the nuclear hormone receptor family. NR3 subfamily. As to quaternary structure, binds DNA as a homodimer. Can form a heterodimer with ESR2. Interacts with coactivator NCOA5. Interacts with PELP1, the interaction is enhanced by 17-beta-estradiol; the interaction increases ESR1 transcriptional activity. Interacts with NCOA7; the interaction is ligand-inducible. Interacts with AKAP13, CUEDC2, HEXIM1, KDM5A, MAP1S, SMARD1, and UBE1C. Interacts with MUC1; the interaction is stimulated by 7 beta-estradiol (E2) and enhances ESR1-mediated transcription. Interacts with DNTTIP2, and UIMC1. Interacts with KMT2D/MLL2. Interacts with ATAD2; the interaction is enhanced by estradiol. Interacts with KIF18A and LDB1. Interacts with RLIM (via its C-terminus). Interacts with MACROD1. Interacts with SH2D4A and PLCG. Interacts with SH2D4A; the interaction blocks binding to PLCG and inhibits estrogen-induced cell proliferation. Interacts with DYNLL1. Interacts with CCDC62; the interaction requires estradiol and appears to enhance the transcription of target genes. Interacts with NR2C1; the interaction prevents homodimerization of ESR1 and suppresses its transcriptional activity and cell growth. Interacts with DNAAF4. Interacts with PRMT2. Interacts with RBFOX2. Interacts with EP300; the interaction is estrogen-dependent and enhanced by CITED1. Interacts with CITED1; the interaction is estrogen-dependent. Interacts with FAM120B, FOXL2, PHB2 and SLC30A9. Interacts with coactivators NCOA3 and NCOA6. Interacts with STK3/MST2 only in the presence of SAV1 and vice-versa. Binds to CSNK1D. Interacts with NCOA2; NCOA2 can interact with ESR1 AF-1 and AF-2 domains simultaneously and mediate their transcriptional synergy. Interacts with DDX5. Interacts with NCOA1; the interaction seems to require a self-association of N-terminal and C-terminal regions. Interacts with ZNF366, DDX17, NFKB1, RELA, SP1 and SP3. Interacts with NRIP1. Interacts with GPER1; the interaction occurs in an estrogen-dependent manner. Interacts with CLOCK and the interaction is stimulated by estrogen. Interacts with TRIP4 (ufmylated); estrogen dependent. Interacts with LMTK3; the interaction phosphorylates ESR1 (in vitro) and protects it against proteasomal degradation. Interacts with CCAR2 (via N-terminus) in a ligand-independent manner. Interacts with ZFHX3. Interacts with SFR1 in a ligand-dependent and -independent manner. Interacts with DCAF13, LATS1 and DCAF1; regulates ESR1 ubiquitination and ubiquitin-mediated proteasomal degradation. Interacts (via DNA-binding domain) with POU4F2 (C-terminus); this interaction increases the estrogen receptor ESR1 transcriptional activity in a DNA- and ligand 17-beta-estradiol-independent manner. Interacts with ESRRB isoform 1. Interacts with UBE3A and WBP2. Interacts with GTF2B. Interacts with RBM39. In the absence of hormonal ligand, interacts with TACC1. Interacts with PI3KR1 or PI3KR2 and PTK2/FAK1. Interacts with SRC. Interacts with BAG1; the interaction is promoted in the absence of estradiol (17-beta-estradiol/E2). Interacts with and ubiquitinated by STUB1; the interaction is promoted in the absence of estradiol (17-beta-estradiol/E2). Interacts with NEDD8. In terms of processing, phosphorylated by cyclin A/CDK2 and CK1. Phosphorylation probably enhances transcriptional activity. Dephosphorylation at Ser-118 by PPP5C inhibits its transactivation activity. Phosphorylated by LMTK3 (in vitro). Post-translationally, ubiquitinated; regulated by LATS1 via DCAF1 it leads to ESR1 proteasomal degradation. Deubiquitinated by OTUB1. Ubiquitinated by STUB1/CHIP; in the CA1 hippocampal region following loss of endogenous circulating estradiol (17-beta-estradiol/E2). Ubiquitinated by UBR5, leading to its degradation: UBR5 specifically recognizes and binds ligand-bound ESR1 when it is not associated with coactivators (NCOAs). In presence of NCOAs, the UBR5-degron is not accessible, preventing its ubiquitination and degradation. Palmitoylated at Cys-447 by ZDHHC7 and ZDHHC21. Palmitoylation is required for plasma membrane targeting and for rapid intracellular signaling via ERK and AKT kinases and cAMP generation, but not for signaling mediated by the nuclear hormone receptor. In terms of processing, dimethylated by PRMT1 at Arg-260. The methylation may favor cytoplasmic localization. Demethylated by JMJD6 at Arg-260.

The protein resides in the nucleus. It is found in the cytoplasm. It localises to the golgi apparatus. Its subcellular location is the cell membrane. Its function is as follows. Nuclear hormone receptor. The steroid hormones and their receptors are involved in the regulation of eukaryotic gene expression and affect cellular proliferation and differentiation in target tissues. Ligand-dependent nuclear transactivation involves either direct homodimer binding to a palindromic estrogen response element (ERE) sequence or association with other DNA-binding transcription factors, such as AP-1/c-Jun, c-Fos, ATF-2, Sp1 and Sp3, to mediate ERE-independent signaling. Ligand binding induces a conformational change allowing subsequent or combinatorial association with multiprotein coactivator complexes through LXXLL motifs of their respective components. Mutual transrepression occurs between the estrogen receptor (ER) and NF-kappa-B in a cell-type specific manner. Decreases NF-kappa-B DNA-binding activity and inhibits NF-kappa-B-mediated transcription from the IL6 promoter and displace RELA/p65 and associated coregulators from the promoter. Recruited to the NF-kappa-B response element of the CCL2 and IL8 promoters and can displace CREBBP. Present with NF-kappa-B components RELA/p65 and NFKB1/p50 on ERE sequences. Can also act synergistically with NF-kappa-B to activate transcription involving respective recruitment adjacent response elements; the function involves CREBBP. Can activate the transcriptional activity of TFF1. Also mediates membrane-initiated estrogen signaling involving various kinase cascades. Essential for MTA1-mediated transcriptional regulation of BRCA1 and BCAS3. Maintains neuronal survival in response to ischemic reperfusion injury when in the presence of circulating estradiol (17-beta-estradiol/E2). This is Estrogen receptor (ESR1) from Sus scrofa (Pig).